Consider the following 439-residue polypeptide: Serine hydroxymethyltransferase (439 aa).

Residue 127–129 coordinates (6S)-5,6,7,8-tetrahydrofolate; it reads AHV. Position 233 is an N6-(pyridoxal phosphate)lysine (Lys-233).

The protein belongs to the SHMT family. Homodimer. The cofactor is pyridoxal 5'-phosphate.

Its subcellular location is the cytoplasm. Its pathway is amino-acid biosynthesis; glycine biosynthesis; glycine from L-serine: step 1/1. In terms of biological role, catalyzes the reversible interconversion of serine and glycine with a modified folate serving as the one-carbon carrier. Also exhibits a pteridine-independent aldolase activity toward beta-hydroxyamino acids, producing glycine and aldehydes, via a retro-aldol mechanism. In Aeropyrum pernix (strain ATCC 700893 / DSM 11879 / JCM 9820 / NBRC 100138 / K1), this protein is Serine hydroxymethyltransferase.